The chain runs to 456 residues: Bifunctional protein GlmU (456 aa).

The interval 1-229 is pyrophosphorylase; it reads MYNCAIILAA…FEETMGVNSR (229 aa). Residues 8–11, Lys22, Gln73, and 78–79 contribute to the UDP-N-acetyl-alpha-D-glucosamine site; these read LAAG and GT. Residue Asp103 coordinates Mg(2+). Residues Gly140, Glu155, Asn170, and Asn227 each contribute to the UDP-N-acetyl-alpha-D-glucosamine site. Asn227 provides a ligand contact to Mg(2+). Residues 230–250 form a linker region; sequence VQLAEAEKIMRNRINKIHMEN. The N-acetyltransferase stretch occupies residues 251 to 456; that stretch reads GVTLIDHNNT…SWVYKKGLKK (206 aa). Positions 332 and 350 each coordinate UDP-N-acetyl-alpha-D-glucosamine. The Proton acceptor role is filled by His362. UDP-N-acetyl-alpha-D-glucosamine is bound by residues Tyr365 and Asn376. Residues 385–386, Ala422, and Arg439 contribute to the acetyl-CoA site; that span reads NY.

In the N-terminal section; belongs to the N-acetylglucosamine-1-phosphate uridyltransferase family. The protein in the C-terminal section; belongs to the transferase hexapeptide repeat family. As to quaternary structure, homotrimer. It depends on Mg(2+) as a cofactor.

Its subcellular location is the cytoplasm. The enzyme catalyses alpha-D-glucosamine 1-phosphate + acetyl-CoA = N-acetyl-alpha-D-glucosamine 1-phosphate + CoA + H(+). It catalyses the reaction N-acetyl-alpha-D-glucosamine 1-phosphate + UTP + H(+) = UDP-N-acetyl-alpha-D-glucosamine + diphosphate. Its pathway is nucleotide-sugar biosynthesis; UDP-N-acetyl-alpha-D-glucosamine biosynthesis; N-acetyl-alpha-D-glucosamine 1-phosphate from alpha-D-glucosamine 6-phosphate (route II): step 2/2. It participates in nucleotide-sugar biosynthesis; UDP-N-acetyl-alpha-D-glucosamine biosynthesis; UDP-N-acetyl-alpha-D-glucosamine from N-acetyl-alpha-D-glucosamine 1-phosphate: step 1/1. It functions in the pathway bacterial outer membrane biogenesis; LPS lipid A biosynthesis. Its function is as follows. Catalyzes the last two sequential reactions in the de novo biosynthetic pathway for UDP-N-acetylglucosamine (UDP-GlcNAc). The C-terminal domain catalyzes the transfer of acetyl group from acetyl coenzyme A to glucosamine-1-phosphate (GlcN-1-P) to produce N-acetylglucosamine-1-phosphate (GlcNAc-1-P), which is converted into UDP-GlcNAc by the transfer of uridine 5-monophosphate (from uridine 5-triphosphate), a reaction catalyzed by the N-terminal domain. The sequence is that of Bifunctional protein GlmU from Clostridium kluyveri (strain NBRC 12016).